Here is a 608-residue protein sequence, read N- to C-terminus: UvrABC system protein C (608 aa).

In terms of domain architecture, GIY-YIG spans 15 to 93 (HQPGVYRMYN…IKQYLPKYNV (79 aa)). In terms of domain architecture, UVR spans 203 to 238 (RQVIQTLVKQMESASQSLNFEKAAIIRDQIQAMRRV).

The protein belongs to the UvrC family. In terms of assembly, interacts with UvrB in an incision complex.

It localises to the cytoplasm. Functionally, the UvrABC repair system catalyzes the recognition and processing of DNA lesions. UvrC both incises the 5' and 3' sides of the lesion. The N-terminal half is responsible for the 3' incision and the C-terminal half is responsible for the 5' incision. This chain is UvrABC system protein C, found in Aliivibrio fischeri (strain ATCC 700601 / ES114) (Vibrio fischeri).